We begin with the raw amino-acid sequence, 542 residues long: Chaperonin GroEL 2 (542 aa).

ATP is bound by residues Thr-30–Pro-33, Lys-51, Asp-87–Thr-91, Gly-415, and Asp-496. A disordered region spans residues Ala-523–Phe-542. Positions Gln-533–Phe-542 are enriched in pro residues.

This sequence belongs to the chaperonin (HSP60) family. Forms a cylinder of 14 subunits composed of two heptameric rings stacked back-to-back. Interacts with the co-chaperonin GroES.

It localises to the cytoplasm. It catalyses the reaction ATP + H2O + a folded polypeptide = ADP + phosphate + an unfolded polypeptide.. Functionally, together with its co-chaperonin GroES, plays an essential role in assisting protein folding. The GroEL-GroES system forms a nano-cage that allows encapsulation of the non-native substrate proteins and provides a physical environment optimized to promote and accelerate protein folding. This Sinorhizobium medicae (strain WSM419) (Ensifer medicae) protein is Chaperonin GroEL 2.